The primary structure comprises 96 residues: Large ribosomal subunit protein bL28 (96 aa).

Residues Met1–Lys24 form a disordered region.

The protein belongs to the bacterial ribosomal protein bL28 family.

This chain is Large ribosomal subunit protein bL28, found in Sinorhizobium fredii (strain NBRC 101917 / NGR234).